Consider the following 282-residue polypeptide: U1 small nuclear ribonucleoprotein A (282 aa).

Alanine 2 is modified (N-acetylalanine). The RRM 1 domain maps to 10–89 (HTIYINNLNE…KPMRIQYAKT (80 aa)). Position 60 is an N6-acetyllysine (lysine 60). The tract at residues 101–141 (FVERDRKREKRKPKSQETPAAKKAVQGGAAAPVVGTVQGPV) is disordered. The segment covering 119-141 (PAAKKAVQGGAAAPVVGTVQGPV) has biased composition (low complexity). An Omega-N-methylarginine modification is found at arginine 152. Residues 208 to 282 (HILFLTNLPE…NAMKISFAKK (75 aa)) enclose the RRM 2 domain.

It belongs to the RRM U1 A/B'' family. U1 snRNP is composed of the 7 core Sm proteins SNRPB, SNRPD1, SNRPD2, SNRPD3, SNRPE, SNRPF and SNRPG that assemble in a heptameric protein ring on the Sm site of the small nuclear RNA to form the core snRNP, and at least three U1 snRNP-specific proteins SNRNP70/U1-70K, SNRPA/U1-A and SNRPC/U1-C. Interacts with SFPQ; component of a snRNP-free complex with SFPQ.

It is found in the nucleus. Component of the spliceosomal U1 snRNP, which is essential for recognition of the pre-mRNA 5' splice-site and the subsequent assembly of the spliceosome. U1 snRNP is the first snRNP to interact with pre-mRNA. This interaction is required for the subsequent binding of U2 snRNP and the U4/U6/U5 tri-snRNP. SNRPA binds stem loop II of U1 snRNA. In a snRNP-free form (SF-A) may be involved in coupled pre-mRNA splicing and polyadenylation process. May bind preferentially to the 5'-UGCAC-3' motif on RNAs. In Bos taurus (Bovine), this protein is U1 small nuclear ribonucleoprotein A (SNRPA).